Here is a 247-residue protein sequence, read N- to C-terminus: Adenosylcobinamide-GDP ribazoletransferase (247 aa).

Transmembrane regions (helical) follow at residues 34–54 (IVMF…IFIL), 59–79 (CGIP…TGGF), 113–133 (GGLA…ELAL), 138–158 (MLAA…LLMY), and 187–207 (LAVI…AMVV).

This sequence belongs to the CobS family. Mg(2+) is required as a cofactor.

It localises to the cell inner membrane. The enzyme catalyses alpha-ribazole + adenosylcob(III)inamide-GDP = adenosylcob(III)alamin + GMP + H(+). It carries out the reaction alpha-ribazole 5'-phosphate + adenosylcob(III)inamide-GDP = adenosylcob(III)alamin 5'-phosphate + GMP + H(+). The protein operates within cofactor biosynthesis; adenosylcobalamin biosynthesis; adenosylcobalamin from cob(II)yrinate a,c-diamide: step 7/7. Functionally, joins adenosylcobinamide-GDP and alpha-ribazole to generate adenosylcobalamin (Ado-cobalamin). Also synthesizes adenosylcobalamin 5'-phosphate from adenosylcobinamide-GDP and alpha-ribazole 5'-phosphate. The protein is Adenosylcobinamide-GDP ribazoletransferase of Salmonella choleraesuis (strain SC-B67).